A 287-amino-acid chain; its full sequence is Centromere protein P (287 aa).

Residues Met1–Phe37 are a coiled coil.

The protein belongs to the CENP-P/CTF19 family. As to quaternary structure, component of the CENPA-HI complex, at least composed of CENPH, CENPI, CENPK, CENPL, CENPM, CENPO and CENPP.

The protein localises to the nucleus. It localises to the chromosome. Its subcellular location is the centromere. Its function is as follows. Component of the CENPA-HI complex, a centromeric complex involved in assembly of kinetochore proteins, mitotic progression and chromosome segregation. The polypeptide is Centromere protein P (CENPP) (Gallus gallus (Chicken)).